Here is a 214-residue protein sequence, read N- to C-terminus: Coiled-coil domain-containing protein 169 (214 aa).

Residues 29-154 (DAVQLSIFEL…NERRTYLAEM (126 aa)) adopt a coiled-coil conformation. Residues 155–170 (SQGSGLHQVSKRQQVD) show a composition bias toward polar residues. Positions 155 to 214 (SQGSGLHQVSKRQQVDQLPRMQENLVKTGRYNPAKQKTVSAKRGPVKKITRPNHLPELHP) are disordered.

The protein belongs to the CCDC169 family.

This chain is Coiled-coil domain-containing protein 169 (CCDC169), found in Homo sapiens (Human).